A 144-amino-acid polypeptide reads, in one-letter code: Prefoldin subunit alpha (144 aa).

Belongs to the prefoldin subunit alpha family. Heterohexamer of two alpha and four beta subunits.

The protein localises to the cytoplasm. Molecular chaperone capable of stabilizing a range of proteins. Seems to fulfill an ATP-independent, HSP70-like function in archaeal de novo protein folding. The polypeptide is Prefoldin subunit alpha (Methanosarcina barkeri (strain Fusaro / DSM 804)).